The chain runs to 174 residues: Large ribosomal subunit protein uL18 (174 aa).

This sequence belongs to the universal ribosomal protein uL18 family. As to quaternary structure, part of the 50S ribosomal subunit. Contacts the 5S and 23S rRNAs.

Its function is as follows. This is one of the proteins that bind and probably mediate the attachment of the 5S RNA into the large ribosomal subunit, where it forms part of the central protuberance. This is Large ribosomal subunit protein uL18 from Methanoregula boonei (strain DSM 21154 / JCM 14090 / 6A8).